The sequence spans 490 residues: Cruciferin BnC1 (490 aa).

A signal peptide spans 1–23; the sequence is MARLSSLLSFSLALLIFLHGSTA. Disulfide bonds link C30/C63 and C106/C307. Cupin type-1 domains are found at residues 35-263 and 313-462; these read LNAL…RTAQ and DNLD…EEAR. T109 is modified (phosphothreonine). A disordered region spans residues 113–164; the sequence is SSVFQPSGGSPSGEGQGQGQQGQGQGHQGQGQGQQGQQGQQGQQSQGQGFRD. Positions 122–148 are enriched in gly residues; it reads SPSGEGQGQGQQGQGQGHQGQGQGQQG. A compositionally biased stretch (low complexity) spans 149 to 161; the sequence is QQGQQGQQSQGQG. Y330 carries the post-translational modification Phosphotyrosine. Phosphoserine is present on S332. T426 bears the Phosphothreonine mark.

The protein belongs to the 11S seed storage protein (globulins) family. As to quaternary structure, hexamer; each subunit is composed of an acidic and a basic chain derived from a single precursor and linked by a disulfide bond.

Its function is as follows. This is a seed storage protein. The sequence is that of Cruciferin BnC1 (BnC1) from Brassica napus (Rape).